A 752-amino-acid chain; its full sequence is Primary amine oxidase (752 aa).

The signal sequence occupies residues 1–27 (MAILSPRKTALALAVALSCAWQSPAFA). Substrate contacts are provided by residues 408–419 (YLDSGDYGMGTL) and 490–495 (VGNYDY). The Proton acceptor role is filled by Asp410. Tyr493 acts as the Schiff-base intermediate with substrate; via topaquinone in catalysis. 2',4',5'-topaquinone is present on Tyr493. 2 residues coordinate Cu cation: His551 and His553. Asp560, Leu561, Asp562, Glu600, Tyr694, Asp697, Glu699, and Asp705 together coordinate Ca(2+). Asp560 serves as a coordination point for Mn(2+). Asp562 contributes to the Mn(2+) binding site. Position 705 (Asp705) interacts with Mn(2+). Cu cation is bound at residue His716.

It belongs to the copper/topaquinone oxidase family. Homodimer. Cu cation is required as a cofactor. Requires Ca(2+) as cofactor. L-topaquinone serves as cofactor. It depends on Mn(2+) as a cofactor. Post-translationally, topaquinone (TPQ) is generated by copper-dependent autoxidation of a specific tyrosyl residue.

The protein resides in the periplasm. The catalysed reaction is a primary methyl amine + O2 + H2O = an aldehyde + H2O2 + NH4(+). In terms of biological role, active on tyramine, tryptamine, beta-phenethylamine and dopamine. This is Primary amine oxidase (maoA) from Klebsiella michiganensis (strain ATCC 8724 / DSM 4798 / JCM 20051 / NBRC 3318 / NRRL B-199 / KCTC 1686 / BUCSAV 143 / CCM 1901).